We begin with the raw amino-acid sequence, 233 residues long: uncharacterized protein (233 aa).

The Zn(2+) site is built by His64, His66, Asp68, His69, His143, Asp162, and His212.

This sequence belongs to the metallo-beta-lactamase superfamily. Glyoxalase II family. Requires Zn(2+) as cofactor.

This is an uncharacterized protein from Bacillus subtilis (strain 168).